Reading from the N-terminus, the 167-residue chain is MRCGPLYQFLWLWPYLSYVEAVPIRKVQDDTKTLIKTIVTRINDISHTQSVSSKQRVTGLDFIPGLHPLLSLSKMDQTLAIYQQILTSLPSRNVVQISNDLENLRDLLHLLAASKSCPLPQVRALESLESLGVVLEASLYSTEVVALSRLQGSLQDMLRQLDLSPGC.

Positions Met1–Ala21 are cleaved as a signal peptide. Residues Cys117 and Cys167 are joined by a disulfide bond.

It belongs to the leptin family.

The protein resides in the secreted. Functionally, key player in the regulation of energy balance and body weight control. Once released into the circulation, has central and peripheral effects by binding LEPR, found in many tissues, which results in the activation of several major signaling pathways. In the hypothalamus, acts as an appetite-regulating factor that induces a decrease in food intake and an increase in energy consumption by inducing anorexinogenic factors and suppressing orexigenic neuropeptides, also regulates bone mass and secretion of hypothalamo-pituitary-adrenal hormones. In the periphery, increases basal metabolism, influences reproductive function, regulates pancreatic beta-cell function and insulin secretion, is pro-angiogenic for endothelial cell and affects innate and adaptive immunity. In the arcuate nucleus of the hypothalamus, activates by depolarization POMC neurons inducing FOS and SOCS3 expression to release anorexigenic peptides and inhibits by hyperpolarization NPY neurons inducing SOCS3 with a consequent reduction on release of orexigenic peptides. In addition to its known satiety inducing effect, has a modulatory role in nutrient absorption. In the intestine, reduces glucose absorption by enterocytes by activating PKC and leading to a sequential activation of p38, PI3K and ERK signaling pathways which exerts an inhibitory effect on glucose absorption. Acts as a growth factor on certain tissues, through the activation of different signaling pathways increases expression of genes involved in cell cycle regulation such as CCND1, via JAK2-STAT3 pathway, or VEGFA, via MAPK1/3 and PI3K-AKT1 pathways. May also play an apoptotic role via JAK2-STAT3 pathway and up-regulation of BIRC5 expression. Pro-angiogenic, has mitogenic activity on vascular endothelial cells and plays a role in matrix remodeling by regulating the expression of matrix metalloproteinases (MMPs) and tissue inhibitors of metalloproteinases (TIMPs). In innate immunity, modulates the activity and function of neutrophils by increasing chemotaxis and the secretion of oxygen radicals. Increases phagocytosis by macrophages and enhances secretion of pro-inflammatory mediators. Increases cytotoxic ability of NK cells. Plays a pro-inflammatory role, in synergy with IL1B, by inducing NOS2 which promotes the production of IL6, IL8 and Prostaglandin E2, through a signaling pathway that involves JAK2, PI3K, MAP2K1/MEK1 and MAPK14/p38. In adaptive immunity, promotes the switch of memory T-cells towards T helper-1 cell immune responses. Increases CD4(+)CD25(-) T-cell proliferation and reduces autophagy during TCR (T-cell receptor) stimulation, through MTOR signaling pathway activation and BCL2 up-regulation. This is Leptin (LEP) from Bubalus bubalis (Domestic water buffalo).